Here is a 209-residue protein sequence, read N- to C-terminus: Ribonuclease HII (209 aa).

Residues 5–202 (SMTLGIDEAG…KNRILNPKLL (198 aa)) enclose the RNase H type-2 domain. Positions 11, 12, and 108 each coordinate a divalent metal cation.

This sequence belongs to the RNase HII family. It depends on Mn(2+) as a cofactor. The cofactor is Mg(2+).

Its subcellular location is the cytoplasm. The enzyme catalyses Endonucleolytic cleavage to 5'-phosphomonoester.. Its function is as follows. Endonuclease that specifically degrades the RNA of RNA-DNA hybrids. This Helicobacter pylori (strain J99 / ATCC 700824) (Campylobacter pylori J99) protein is Ribonuclease HII (rnhB).